We begin with the raw amino-acid sequence, 214 residues long: NADH-quinone oxidoreductase subunit C (214 aa).

Belongs to the complex I 30 kDa subunit family. As to quaternary structure, NDH-1 is composed of 14 different subunits. Subunits NuoB, C, D, E, F, and G constitute the peripheral sector of the complex.

Its subcellular location is the cell inner membrane. The enzyme catalyses a quinone + NADH + 5 H(+)(in) = a quinol + NAD(+) + 4 H(+)(out). Functionally, NDH-1 shuttles electrons from NADH, via FMN and iron-sulfur (Fe-S) centers, to quinones in the respiratory chain. The immediate electron acceptor for the enzyme in this species is believed to be ubiquinone. Couples the redox reaction to proton translocation (for every two electrons transferred, four hydrogen ions are translocated across the cytoplasmic membrane), and thus conserves the redox energy in a proton gradient. The chain is NADH-quinone oxidoreductase subunit C from Caulobacter sp. (strain K31).